Here is a 177-residue protein sequence, read N- to C-terminus: Probable DNA-directed RNA polymerase subunit delta (177 aa).

One can recognise an HTH HARE-type domain in the interval 14-83; that stretch reads LSMIEVARAI…GENKWGLRSW (70 aa). Composition is skewed to acidic residues over residues 117-134 and 142-157; these read GDDD…DEDN and EYDD…EVES. The disordered stretch occupies residues 117–164; the sequence is GDDDAIDYGHDDPEDEDNYPGSVSSEYDDENPDDEKDEVESYDQKSTK.

The protein belongs to the RpoE family. As to quaternary structure, RNAP is composed of a core of 2 alpha, a beta and a beta' subunits. The core is associated with a delta subunit and one of several sigma factors.

Functionally, participates in both the initiation and recycling phases of transcription. In the presence of the delta subunit, RNAP displays an increased specificity of transcription, a decreased affinity for nucleic acids, and an increased efficiency of RNA synthesis because of enhanced recycling. The polypeptide is Probable DNA-directed RNA polymerase subunit delta (Streptococcus suis (strain 98HAH33)).